We begin with the raw amino-acid sequence, 292 residues long: MALIEGVGDEVTLLFGVVFLVLVLVLAWASTHTVEPPEHLLSPSPGASPSTETDSQEPLPPGNTDSSPGGVRDEDDKSEPGTEAGAAGQSADGSRAGGGDGGLLDDAGLGSDGLRHRESAGPSTHPPESTPSATQPSAEDAASDTHRNMVLRLKFLNDTERTAQVNPQDTIGYIKRTYFAGQEHQVRLIYQGQLLQDDSQTLASLNLADNSVLHCHISQHATRAMPAGARAADQVHVALNVGSLMVPLFVLMLSVLWYFQIQYRQFFTAPATASLVGITIFFSFVAFGVYRR.

A helical membrane pass occupies residues 11–31 (VTLLFGVVFLVLVLVLAWAST). The disordered stretch occupies residues 34–143 (VEPPEHLLSP…TQPSAEDAAS (110 aa)). Basic and acidic residues predominate over residues 71 to 80 (VRDEDDKSEP). Residues 84–94 (AGAAGQSADGS) show a composition bias toward low complexity. A Ubiquitin-like domain is found at 149–222 (MVLRLKFLND…LHCHISQHAT (74 aa)). 2 helical membrane-spanning segments follow: residues 237–257 (VALNVGSLMVPLFVLMLSVLW) and 269–289 (APATASLVGITIFFSFVAFGV).

Its subcellular location is the membrane. It is found in the cytoplasm. It localises to the nucleus. Functionally, may contribute to the regulation of translation during cell-cycle progression. May contribute to the regulation of cell proliferation. The membrane form is involved in sterol-regulated ubiquitination and degradation of HMG-CoA reductase HMGCR. May be involved in centrosome assembly. This Danio rerio (Zebrafish) protein is Transmembrane and ubiquitin-like domain-containing protein 1 (tmub1).